Consider the following 286-residue polypeptide: Digeranylgeranylglyceryl phosphate synthase (286 aa).

The next 8 helical transmembrane spans lie at 21–41 (AVAA…FAVT), 42–62 (TAHV…GNAI), 96–116 (FLFV…IVLA), 133–155 (LPGV…GAAA), 162–181 (FGVV…REII), 214–234 (VLLV…FGIW), 235–255 (YLTL…QAPD), and 266–286 (RGMF…VAGI).

Belongs to the UbiA prenyltransferase family. DGGGP synthase subfamily. Mg(2+) is required as a cofactor.

It localises to the cell membrane. It catalyses the reaction sn-3-O-(geranylgeranyl)glycerol 1-phosphate + (2E,6E,10E)-geranylgeranyl diphosphate = 2,3-bis-O-(geranylgeranyl)-sn-glycerol 1-phosphate + diphosphate. Its pathway is membrane lipid metabolism; glycerophospholipid metabolism. In terms of biological role, prenyltransferase that catalyzes the transfer of the geranylgeranyl moiety of geranylgeranyl diphosphate (GGPP) to the C2 hydroxyl of (S)-3-O-geranylgeranylglyceryl phosphate (GGGP). This reaction is the second ether-bond-formation step in the biosynthesis of archaeal membrane lipids. The polypeptide is Digeranylgeranylglyceryl phosphate synthase (Haloquadratum walsbyi (strain DSM 16790 / HBSQ001)).